Here is a 387-residue protein sequence, read N- to C-terminus: MKSTHSKIKIAHVQLMPLLSGVQRVSLQEFELLPNEQFDINLICKESGPLTDYLDDSVRAFFVPTLCRNISLIKDMKSLISLYKLLKKEKYDIVHTHSSKTGILGRIAARLAGVPCVVHTVHGFAFESTKRKSVKLVYKWLEIFAAKCTTRLICLHNEDKEICIKELYVDPMKISVIPNGVDLEKFAPAINKGDLKEKILGLKRNSFVFTMVGRLWPQKNPLYFAEAAKYIIENNLIPDSVFVIVGDGELMNDLKYNYQTDMNLKKRLLLLGWRNDIPNILKASDVFVLPSLWEGMPLAILEAQSTGLPCIVSNINGNNCLVKNEFDGFLIELNDIDSFINALVRVTDDKVLNIMSKNCRNKIVNGFNIVKRVDKIKDLYIDMVVNK.

It belongs to the glycosyltransferase group 1 family. Glycosyltransferase 4 subfamily. It depends on Mg(2+) as a cofactor. The cofactor is Mn(2+). Fe(2+) serves as cofactor.

The catalysed reaction is N-acetyl-alpha-D-glucosaminyl-di-trans,octa-cis-undecaprenyl diphosphate + UDP-alpha-D-galactose = alpha-D-Gal-(1-&gt;3)-alpha-D-GlcNAc-di-trans,octa-cis-undecaprenyl diphosphate + UDP + H(+). It participates in bacterial outer membrane biogenesis; LPS O-antigen biosynthesis. Functionally, involved in the biosynthesis of the lipopolysaccharide (LPS) O-antigen region. Catalyzes the transfer of galactose from UDP-galactose to GlcNAc-undecaprenyl diphosphate via an alpha1,3-linkage. Has strict substrate specificity. This chain is UDP-Gal:alpha-D-GlcNAc-diphosphoundecaprenol alpha-1,3-galactosyltransferase, found in Escherichia coli.